Consider the following 583-residue polypeptide: Chromosomal replication initiator protein DnaA (583 aa).

The domain I, interacts with DnaA modulators stretch occupies residues 1–91; that stretch reads MSNSNFSIEE…KHVLKTRLDL (91 aa). The interval 91–241 is domain II; that stretch reads LSVSLAITST…SFNDGLDGES (151 aa). A disordered region spans residues 151-239; that stretch reads KAEQRDGASQ…SSSFNDGLDG (89 aa). Positions 172–182 are enriched in basic and acidic residues; it reads EAARRREHDAD. Residues 242-458 are domain III, AAA+ region; sequence LLNKNYTFEN…GALIRVTAYC (217 aa). Positions 286, 288, 289, and 290 each coordinate ATP. The domain IV, binds dsDNA stretch occupies residues 459–583; that stretch reads ALSHEPLTVE…TQKIKSHARD (125 aa).

It belongs to the DnaA family. Oligomerizes as a right-handed, spiral filament on DNA at oriC.

Its subcellular location is the cytoplasm. Plays an essential role in the initiation and regulation of chromosomal replication. ATP-DnaA binds to the origin of replication (oriC) to initiate formation of the DNA replication initiation complex once per cell cycle. Binds the DnaA box (a 9 base pair repeat at the origin) and separates the double-stranded (ds)DNA. Forms a right-handed helical filament on oriC DNA; dsDNA binds to the exterior of the filament while single-stranded (ss)DNA is stabiized in the filament's interior. The ATP-DnaA-oriC complex binds and stabilizes one strand of the AT-rich DNA unwinding element (DUE), permitting loading of DNA polymerase. After initiation quickly degrades to an ADP-DnaA complex that is not apt for DNA replication. Binds acidic phospholipids. This is Chromosomal replication initiator protein DnaA from Corynebacterium jeikeium (strain K411).